Here is a 77-residue protein sequence, read N- to C-terminus: U8-lycotoxin-Ls1w (77 aa).

Positions 1-20 are cleaved as a signal peptide; it reads MKLIIFTGLVLFAIVSLIEA. A propeptide spanning residues 21-26 is cleaved from the precursor; that stretch reads QAENEK.

This sequence belongs to the neurotoxin 19 (CSTX) family. 08 (U8-Lctx) subfamily. Post-translationally, contains 4 disulfide bonds. As to expression, expressed by the venom gland.

It localises to the secreted. The polypeptide is U8-lycotoxin-Ls1w (Lycosa singoriensis (Wolf spider)).